The chain runs to 239 residues: Suppressor of organelle fusion 1 (239 aa).

The protein belongs to the WD repeat WDR91 family. As to quaternary structure, interacts with sorf-2; the interaction is direct. Interacts with bec-1.

The protein localises to the early endosome. The protein resides in the late endosome. It is found in the cytoplasm. In terms of biological role, together with sorf-2 negatively regulates the levels of phosphatidylinositol 3-phosphate (PtdIns3P) to enable the conversion of early endosomes to late endosomes. Binds to sorf-2 and the sorf-1-sorf-2 complex likely acts through bec-1, a non-catalytic subunit of phosphatidylinositol 3-kinase (PI3K), to suppress PI3K activity, thereby negatively regulating endosomal PtdIns3P levels. This is Suppressor of organelle fusion 1 from Caenorhabditis elegans.